Here is a 465-residue protein sequence, read N- to C-terminus: Probable inactive receptor-like kinase BSK12 (465 aa).

Positions 1 to 12 (MGCCYSLSSTVD) are enriched in polar residues. Positions 1–34 (MGCCYSLSSTVDPVQDHTTDASSEPRNGGGEDPP) are disordered. The N-myristoyl glycine moiety is linked to residue Gly-2. 2 S-palmitoyl cysteine lipidation sites follow: Cys-3 and Cys-4. The 242-residue stretch at 50-291 (FSPENIVSDQ…KEIVATLETL (242 aa)) folds into the Protein kinase domain. ATP-binding positions include 56–64 (VSDQTSDVV) and Lys-78.

This sequence belongs to the protein kinase superfamily. Ser/Thr protein kinase family. As to quaternary structure, interacts with YDA. In terms of processing, diacylation-mediated membrane association is essential for BSK12 function. As to expression, expressed at the mRNA level in the sperm cells in mature pollen, but the protein is only detectable in the zygote and the micropylar endosperm upon fertilization.

It is found in the cell membrane. Its function is as follows. Probable inactive protein kinase that activates the YODA MAP kinase cascade, which regulates the asymmetric first division and embryo polarity, by promoting the elongation of the zygote and the development of its basal daughter cell into the extra-embryonic suspensor. Acts as an adapter at the plasma membrane, possibly by recruiting and binding an activator. The chain is Probable inactive receptor-like kinase BSK12 from Arabidopsis thaliana (Mouse-ear cress).